A 434-amino-acid chain; its full sequence is Histidinol dehydrogenase (434 aa).

The substrate site is built by S242, Q264, and H267. Zn(2+)-binding residues include Q264 and H267. Active-site proton acceptor residues include E332 and H333. The substrate site is built by H333, D366, E420, and H425. D366 contributes to the Zn(2+) binding site. Residue H425 coordinates Zn(2+).

Belongs to the histidinol dehydrogenase family. The cofactor is Zn(2+).

It carries out the reaction L-histidinol + 2 NAD(+) + H2O = L-histidine + 2 NADH + 3 H(+). Its pathway is amino-acid biosynthesis; L-histidine biosynthesis; L-histidine from 5-phospho-alpha-D-ribose 1-diphosphate: step 9/9. Its function is as follows. Catalyzes the sequential NAD-dependent oxidations of L-histidinol to L-histidinaldehyde and then to L-histidine. This Oleidesulfovibrio alaskensis (strain ATCC BAA-1058 / DSM 17464 / G20) (Desulfovibrio alaskensis) protein is Histidinol dehydrogenase.